The primary structure comprises 60 residues: Large ribosomal subunit protein bL32 (60 aa).

Residues 1-60 (MAVQQVKKSRSKRDMRRSHDSLTNPTLSTDKSTGELHLRHHVSPNGFYKGRKVVDTKSED) form a disordered region. Positions 7–16 (KKSRSKRDMR) are enriched in basic residues. A compositionally biased stretch (polar residues) spans 22–31 (LTNPTLSTDK).

It belongs to the bacterial ribosomal protein bL32 family.

The protein is Large ribosomal subunit protein bL32 of Francisella tularensis subsp. holarctica (strain LVS).